The chain runs to 557 residues: GMP synthase [glutamine-hydrolyzing] (557 aa).

The Glutamine amidotransferase type-1 domain occupies 13–209; it reads TILTLDFGSQ…AVDICGANPN (197 aa). Residue C89 is the Nucleophile of the active site. Residues H183 and E185 contribute to the active site. The 205-residue stretch at 210–414 folds into the GMPS ATP-PPase domain; it reads WTMSKFVDQE…LGIAHELVMR (205 aa). 238 to 244 serves as a coordination point for ATP; sequence SGGVDST. XMP contacts are provided by R311, D476, K549, and E555.

As to quaternary structure, homodimer. Mg(2+) serves as cofactor.

The protein localises to the cytoplasm. Its subcellular location is the cytosol. It carries out the reaction XMP + L-glutamine + ATP + H2O = GMP + L-glutamate + AMP + diphosphate + 2 H(+). The protein operates within purine metabolism; GMP biosynthesis; GMP from XMP (L-Gln route): step 1/1. Its activity is regulated as follows. Inhibited by 6-diazo-5-oxo-l-norleucine (DON) and acivicin (ACI). Catalyzes the conversion of xanthine monophosphate (XMP) to GMP in the presence of glutamine and ATP through an adenyl-XMP intermediate. This chain is GMP synthase [glutamine-hydrolyzing] (gua1), found in Aspergillus fumigatus (strain ATCC MYA-4609 / CBS 101355 / FGSC A1100 / Af293) (Neosartorya fumigata).